Reading from the N-terminus, the 100-residue chain is Urease subunit gamma (100 aa).

Belongs to the urease gamma subunit family. In terms of assembly, heterotrimer of UreA (gamma), UreB (beta) and UreC (alpha) subunits. Three heterotrimers associate to form the active enzyme.

The protein resides in the cytoplasm. The catalysed reaction is urea + 2 H2O + H(+) = hydrogencarbonate + 2 NH4(+). It participates in nitrogen metabolism; urea degradation; CO(2) and NH(3) from urea (urease route): step 1/1. This chain is Urease subunit gamma, found in Haemophilus influenzae (strain PittGG).